A 243-amino-acid chain; its full sequence is uncharacterized protein (243 aa).

The protein resides in the nucleus. It localises to the nucleolus. This is an uncharacterized protein from Schizosaccharomyces pombe (strain 972 / ATCC 24843) (Fission yeast).